The primary structure comprises 589 residues: Protein NRT1/ PTR FAMILY 4.7 (589 aa).

The next 12 membrane-spanning stretches (helical) occupy residues glycine 59–alanine 79, alanine 105–phenylalanine 125, threonine 127–valine 147, valine 160–leucine 180, phenylalanine 201–valine 221, tryptophan 230–alanine 250, isoleucine 344–glutamine 364, phenylalanine 383–proline 403, isoleucine 429–lysine 449, leucine 471–phenylalanine 491, leucine 520–leucine 540, and phenylalanine 560–serine 580.

This sequence belongs to the major facilitator superfamily. Proton-dependent oligopeptide transporter (POT/PTR) (TC 2.A.17) family. As to expression, expressed in flowers.

The protein localises to the membrane. This chain is Protein NRT1/ PTR FAMILY 4.7 (NPF4.7), found in Arabidopsis thaliana (Mouse-ear cress).